The primary structure comprises 837 residues: Striatin-interacting protein 1 (837 aa).

Met-1 is subject to N-acetylmethionine. Disordered stretches follow at residues 1 to 67 (MEPA…ESPD) and 333 to 423 (AASP…KGLP). Positions 18–35 (PQPPPPPPPATAQPPPGA) are enriched in pro residues. Over residues 36–46 (PRAAAGLLPGG) the composition is skewed to low complexity. Residues 47-60 (KAREFNRNQRKDSE) show a composition bias toward basic and acidic residues. Ser-59, Ser-335, and Ser-339 each carry phosphoserine. A compositionally biased stretch (low complexity) spans 333 to 343 (AASPPASASDS). A compositionally biased stretch (basic and acidic residues) spans 356–377 (KALIKQDNLDAFNERDPYKADD). Residues 378 to 391 (SREEEEENDDDNSL) are compositionally biased toward acidic residues. Ser-788 carries the post-translational modification Phosphoserine. A required for STRIPAK core complex formation region spans residues 796 to 837 (DNCLQSVLGQRVDLPEDFQMNYDLWLEREVFSKPISWEELLQ).

The protein belongs to the STRIP family. Part of the core of STRIPAK complexes composed of PP2A catalytic and scaffolding subunits, the striatins (PP2A regulatory subunits), the striatin-associated proteins MOB4, STRIP1 and STRIP2, PDCD10 and members of the STE20 kinases, such as STK24 and STK26. The STRIPAK complex can be extended by adapter proteins such as SLMAP:SIKE1, CTTNBP2 or CTTNBP2NL. Interacts with CDC42BPB. Interacts with CTTNBP2NL.

The protein resides in the cytoplasm. Functionally, plays a role in the regulation of cell morphology and cytoskeletal organization. Required in the cortical actin filament dynamics and cell shape. Part of the striatin-interacting phosphatase and kinase (STRIPAK) complexes. STRIPAK complexes have critical roles in protein (de)phosphorylation and are regulators of multiple signaling pathways including Hippo, MAPK, nuclear receptor and cytoskeleton remodeling. Different types of STRIPAK complexes are involved in a variety of biological processes such as cell growth, differentiation, apoptosis, metabolism and immune regulation. The polypeptide is Striatin-interacting protein 1 (STRIP1) (Pongo abelii (Sumatran orangutan)).